The chain runs to 556 residues: 2-succinyl-5-enolpyruvyl-6-hydroxy-3-cyclohexene-1-carboxylate synthase (556 aa).

Belongs to the TPP enzyme family. MenD subfamily. In terms of assembly, homodimer. Mg(2+) serves as cofactor. Mn(2+) is required as a cofactor. Requires thiamine diphosphate as cofactor.

It carries out the reaction isochorismate + 2-oxoglutarate + H(+) = 5-enolpyruvoyl-6-hydroxy-2-succinyl-cyclohex-3-ene-1-carboxylate + CO2. It participates in quinol/quinone metabolism; 1,4-dihydroxy-2-naphthoate biosynthesis; 1,4-dihydroxy-2-naphthoate from chorismate: step 2/7. The protein operates within quinol/quinone metabolism; menaquinone biosynthesis. Functionally, catalyzes the thiamine diphosphate-dependent decarboxylation of 2-oxoglutarate and the subsequent addition of the resulting succinic semialdehyde-thiamine pyrophosphate anion to isochorismate to yield 2-succinyl-5-enolpyruvyl-6-hydroxy-3-cyclohexene-1-carboxylate (SEPHCHC). The chain is 2-succinyl-5-enolpyruvyl-6-hydroxy-3-cyclohexene-1-carboxylate synthase from Salmonella typhi.